The following is a 119-amino-acid chain: Short coiled-coil protein A (119 aa).

Residues 1-10 are compositionally biased toward acidic residues; that stretch reads MEGDVDEDDG. The disordered stretch occupies residues 1-26; the sequence is MEGDVDEDDGTFTNISLADDSADGEP. A coiled-coil region spans residues 48-95; it reads MENQVEQEEKTRLINQVLELQHTLEDLSARVDAVKEENLKLKSENQVL.

It belongs to the SCOC family.

Its subcellular location is the golgi apparatus membrane. It localises to the golgi apparatus. It is found in the trans-Golgi network. The protein resides in the cytoplasm. The protein localises to the cytosol. In terms of biological role, positive regulator of amino acid starvation-induced autophagy. This is Short coiled-coil protein A (scoca) from Danio rerio (Zebrafish).